The primary structure comprises 487 residues: Pentatricopeptide repeat-containing protein At5g61370, mitochondrial (487 aa).

Residues 1-90 (MMSTTVRLNR…TSPRRLLRFF (90 aa)) constitute a mitochondrion transit peptide. PPR repeat units follow at residues 137–171 (DKQTFSIVAETLVKVGKEEDAIGIFKILDKFSCPQ), 172–202 (DGFTVTAIISALCSRGHVKRALGVMHHHKDV), 207–241 (ELSVYRSLLFGWSVQRNVKEARRVIQDMKSAGITP), 242–283 (DLFC…KIQP), 284–318 (TSMSYNILLSCLGRTRRVRESCQILEQMKRSGCDP), 319–353 (DTGSYYFVVRVLYLTGRFGKGNQIVDEMIERGFRP), 354–388 (ERKFYYDLIGVLCGVERVNFALQLFEKMKRSSVGG), and 389–423 (YGQVYDLLIPKLCKGGNFEKGRELWEEALSIDVTL). A disordered region spans residues 466–487 (TKPKLKLKPKRRSKTKKKNLQH).

It belongs to the PPR family. P subfamily.

The protein localises to the mitochondrion. This Arabidopsis thaliana (Mouse-ear cress) protein is Pentatricopeptide repeat-containing protein At5g61370, mitochondrial.